The chain runs to 572 residues: MGLFDKLLRSNERAERGSPSAFVVSSFDSVSNAGKSSIFKHSGMKSYILEFEIVLDDVHRVWKPNETISGTVKLRLRKDVPNVWIKLAHIGEFQLHSNNPMTAGSLKSKYSDTVFCRSTSIYGSEENPLHLTGGEHKFPFSCKINGKNLVSSIDFKKGSIRYWVQAELHAQKTPPIFCKQHYQLIVPIDVGQLPKPNIKTVVLQSPNSSNNGIHVRRLMAAGSADPQDGASSLTRKTGGSSTITNGSSSSNNSGNSNASMLADNKTVKISVEIPCLGYTIGEEIPVKVHVTHYKQYFHPAGLIATLVRISRVSNPRNTEQIETFRKDICQGVAPLYTDPETHEAVIMLKLKVPLDTFPSLDLKNKFFTFQYYVEILANLSRKNLVYTESNRLVGGQRTSSIPMPSNKFSMFQDLSNQGEVTAGEDDSVTFFQDLINVDRLKRLRNVTGMSIEVVIGTHREEHEPESPTVDRLDSHSINQLPDDVDAVYNQCSSAESPIDEAYDYLLHRHNGPSPSSRIFTDTDMTLCYPADPVPLYSRGLDDFTGCSMSGVTDDKQELEQMRLKELESEPPI.

The disordered stretch occupies residues 221–257 (AGSADPQDGASSLTRKTGGSSTITNGSSSSNNSGNSN). The span at 237–257 (TGGSSTITNGSSSSNNSGNSN) shows a compositional bias: low complexity.

The protein belongs to the arrestin family. PalF/RIM8 subfamily.

Its function is as follows. Required for the proteolytic cleavage of the transcription factor RIM101 in response to alkaline ambient pH. The polypeptide is pH-response regulator protein palF/RIM8 (RIM8) (Kluyveromyces lactis (strain ATCC 8585 / CBS 2359 / DSM 70799 / NBRC 1267 / NRRL Y-1140 / WM37) (Yeast)).